Consider the following 114-residue polypeptide: SNF1-related protein kinase regulatory subunit beta-3 (114 aa).

Residues 26 to 50 (SYNNVYSSTEDETRDPPAVPPHLQH) are disordered. Residues 40 to 114 (DPPAVPPHLQ…PVQRRGSANV (75 aa)) are association with SNF1 complex (ASC).

It belongs to the 5'-AMP-activated protein kinase beta subunit family. In terms of assembly, subunit of a probable heterotrimeric complex consisting of an alpha catalytic (KIN10 or KIN11) subunit, and a beta (KINB) and a gamma (KING or SNF4) non-catalytic regulatory subunits. Interacts with KIN10, KIN11 and SNF4. Interacts with FLZ1, FLZ2, FLZ3, FLZ4, FLZ5, FLZ7, FLZ8, FLZ10, FLZ13, FLZ14, FLZ15 and FLZ16. As to expression, expressed in rosette (at the protein level). Expressed in the whole plant and at the different developmental stage with a higher level in stems.

In terms of biological role, regulatory subunit of the probable trimeric SNF1-related protein kinase (SnRK) complex, which may play a role in a signal transduction cascade regulating gene expression and carbohydrate metabolism in higher plants. The sequence is that of SNF1-related protein kinase regulatory subunit beta-3 (KINB3) from Arabidopsis thaliana (Mouse-ear cress).